Consider the following 548-residue polypeptide: Glutamate--tRNA ligase (548 aa).

Positions 102–112 (PSPSGPLHIGH) match the 'HIGH' region motif.

Belongs to the class-I aminoacyl-tRNA synthetase family. Glutamate--tRNA ligase type 2 subfamily.

The protein localises to the cytoplasm. The enzyme catalyses tRNA(Glu) + L-glutamate + ATP = L-glutamyl-tRNA(Glu) + AMP + diphosphate. In terms of biological role, catalyzes the attachment of glutamate to tRNA(Glu) in a two-step reaction: glutamate is first activated by ATP to form Glu-AMP and then transferred to the acceptor end of tRNA(Glu). The chain is Glutamate--tRNA ligase from Thermoplasma acidophilum (strain ATCC 25905 / DSM 1728 / JCM 9062 / NBRC 15155 / AMRC-C165).